The primary structure comprises 262 residues: Indole-3-glycerol phosphate synthase (262 aa).

The protein belongs to the TrpC family.

The enzyme catalyses 1-(2-carboxyphenylamino)-1-deoxy-D-ribulose 5-phosphate + H(+) = (1S,2R)-1-C-(indol-3-yl)glycerol 3-phosphate + CO2 + H2O. It participates in amino-acid biosynthesis; L-tryptophan biosynthesis; L-tryptophan from chorismate: step 4/5. The chain is Indole-3-glycerol phosphate synthase from Bordetella avium (strain 197N).